Reading from the N-terminus, the 315-residue chain is Phosphatidylglycerol--prolipoprotein diacylglyceryl transferase (315 aa).

2 helical membrane-spanning segments follow: residues 19–39 and 93–113; these read FTIH…VWIL and VWEG…VAFL. Position 141 (Arg141) interacts with a 1,2-diacyl-sn-glycero-3-phospho-(1'-sn-glycerol). 2 helical membrane-spanning segments follow: residues 188–208 and 256–276; these read LFHP…ALII and MWTA…LYQY.

The protein belongs to the Lgt family.

It localises to the cell membrane. The enzyme catalyses L-cysteinyl-[prolipoprotein] + a 1,2-diacyl-sn-glycero-3-phospho-(1'-sn-glycerol) = an S-1,2-diacyl-sn-glyceryl-L-cysteinyl-[prolipoprotein] + sn-glycerol 1-phosphate + H(+). It participates in protein modification; lipoprotein biosynthesis (diacylglyceryl transfer). Its function is as follows. Catalyzes the transfer of the diacylglyceryl group from phosphatidylglycerol to the sulfhydryl group of the N-terminal cysteine of a prolipoprotein, the first step in the formation of mature lipoproteins. In Bifidobacterium longum subsp. infantis (strain ATCC 15697 / DSM 20088 / JCM 1222 / NCTC 11817 / S12), this protein is Phosphatidylglycerol--prolipoprotein diacylglyceryl transferase.